The sequence spans 211 residues: Ferric nitrobindin-like protein (211 aa).

The GXWXGXG signature appears at 21 to 27 (GRWRGPG). Residues 104 to 130 (GVVQEGSDTRTEPGGAEPDPAGRRAPS) form a disordered region.

This sequence belongs to the nitrobindin family.

The sequence is that of Ferric nitrobindin-like protein from Beutenbergia cavernae (strain ATCC BAA-8 / DSM 12333 / CCUG 43141 / JCM 11478 / NBRC 16432 / NCIMB 13614 / HKI 0122).